A 228-amino-acid polypeptide reads, in one-letter code: PKHD-type hydroxylase RPE_4577 (228 aa).

In terms of domain architecture, Fe2OG dioxygenase spans 78–180 (TIFPPLFNRY…RIASFFWTQS (103 aa)). Histidine 98, aspartate 100, and histidine 161 together coordinate Fe cation. Arginine 171 lines the 2-oxoglutarate pocket.

The cofactor is Fe(2+). It depends on L-ascorbate as a cofactor.

The protein is PKHD-type hydroxylase RPE_4577 of Rhodopseudomonas palustris (strain BisA53).